The primary structure comprises 1190 residues: Tight junction protein 2 (1190 aa).

S16 is modified (phosphoserine). A PDZ 1 domain is found at 33–120; that stretch reads TVTLQKDSKR…VAAIVVKRPR (88 aa). A phosphoserine mark is found at S130, S150, S153, S163, S168, S170, S174, S200, S220, S232, S244, S266, S325, S398, S400, S406, S415, S424, S430, and S431. The disordered stretch occupies residues 152–306; sequence RSGYSERSRL…PEPRGRPGPI (155 aa). A compositionally biased stretch (basic and acidic residues) spans 169-291; sequence RSWEDSPERG…PRSRSREHPH (123 aa). The 79-residue stretch at 307 to 385 folds into the PDZ 2 domain; it reads GVLLMKSRAN…KLQLVVLRDS (79 aa). Positions 408-506 are disordered; it reads IESNRSFSPE…RPSPEDEAIY (99 aa). Positions 415–446 are enriched in basic and acidic residues; it reads SPEERRHQYSDYDYHSSSEKLKERPSSREDTP. Position 455 is a phosphothreonine (T455). Residue S499 is modified to Phosphoserine. Residues 509–590 enclose the PDZ 3 domain; that stretch reads NTKMVRFKKG…GEMVTILAQS (82 aa). Y574 carries the phosphotyrosine modification. The SH3 domain occupies 604–669; that stretch reads GDSFFIRSHF…PNKSRAEQMA (66 aa). The 199-residue stretch at 678 to 876 folds into the Guanylate kinase-like domain; that stretch reads NAGDRADFWR…WFGSLKDTIQ (199 aa). Phosphoserine is present on residues S702 and S902. T905 is subject to Phosphothreonine. Phosphoserine is present on residues S913 and S920. 2 disordered regions span residues 920 to 1079 and 1105 to 1190; these read SDFE…KSVL and NARI…DTEL. 2 positions are modified to phosphothreonine: T925 and T933. Over residues 956–967 the composition is skewed to basic and acidic residues; that stretch reads VQHEESIRKPSP. Residues S966, S978, S986, S1006, S1067, and S1068 each carry the phosphoserine modification. Residues 994–1014 are compositionally biased toward basic and acidic residues; that stretch reads EPPKAKTQNKEESYDFSKSYE. Positions 1060-1072 are enriched in acidic residues; that stretch reads EGEEVGESSEEQD. Y1118 is subject to Phosphotyrosine. Residue T1131 is modified to Phosphothreonine. Residues S1147 and S1159 each carry the phosphoserine modification. Positions 1166–1175 are enriched in basic and acidic residues; it reads YRQQLSEHSK. The tract at residues 1188 to 1190 is interaction with SCRIB; that stretch reads TEL.

This sequence belongs to the MAGUK family. In terms of assembly, homodimer. Interacts (via PDZ2 domain) with TJP1/ZO1 (via PDZ2 domain). Interacts with OCLN. Interacts with UBN1. Interacts with SAFB in the nucleus. Interacts with SCRIB. Interacts with USP53 (via the C-terminal region). Interacts with claudins, including CLDN1, CLDN2, CLDN3, CLDN5 and CLDN7. Interacts with CLDN18. Interacts (via N-terminus) with CTNNA1. As to expression, this protein is found in epithelial cell junctions. Isoform A1 is abundant in the heart and brain. Detected in brain and skeletal muscle. It is present almost exclusively in normal tissues. Isoform C1 is expressed at high level in the kidney, pancreas, heart and placenta. Not detected in brain and skeletal muscle. Found in normal as well as in most neoplastic tissues.

The protein resides in the cell junction. Its subcellular location is the adherens junction. It localises to the cell membrane. It is found in the tight junction. The protein localises to the nucleus. Plays a role in tight junctions and adherens junctions. Acts as a positive regulator of RANKL-induced osteoclast differentiation, potentially via mediating downstream transcriptional activity. The protein is Tight junction protein 2 of Homo sapiens (Human).